We begin with the raw amino-acid sequence, 72 residues long: uncharacterized protein (72 aa).

The chain crosses the membrane as a helical span at residues 41–58 (FSFLVHIMCGLTLTSYVI).

It localises to the membrane. This is an uncharacterized protein from Dictyostelium discoideum (Social amoeba).